Here is a 630-residue protein sequence, read N- to C-terminus: Plastin-3 (630 aa).

EF-hand domains lie at 12–47 (DELD…ANMP) and 52–87 (KVRE…VKSS). Ca(2+) contacts are provided by aspartate 25, asparagine 27, asparagine 29, glutamate 36, aspartate 65, asparagine 67, aspartate 69, lysine 71, and glutamate 76. 2 actin-binding regions span residues 109-382 (TSEL…ALTK) and 383-627 (PENQ…GRGM). 2 Calponin-homology (CH) domains span residues 123–239 (EEEK…KIGL) and 267–378 (LSPE…NKYP). Phosphoserine occurs at positions 268, 293, 326, and 339. A Phosphothreonine modification is found at threonine 391. Calponin-homology (CH) domains follow at residues 397-506 (TREE…RRYT) and 518-627 (KATD…GRGM).

Monomer.

It is found in the cytoplasm. Its function is as follows. Actin-bundling protein. This is Plastin-3 (Pls3) from Rattus norvegicus (Rat).